The sequence spans 202 residues: MGNSKSGALSKEILEELQLNTKFTEEELSAWYQSFLKECPSGRITRQEFESIYSKFFPDSDPKAYAQHVFRSFDANSDGTLDFKEYVIALHMTTAGKPTQKLEWAFSLYDVDGNGTISKNEVLEIVMAIFKMIKPEDVKLLPDDENTPEKRAEKIWAFFGKKEDDKLTEEEFIEGTLANKEILRLIQFEPQKVKERIKEKKQ.

Glycine 2 carries the N-myristoyl glycine lipid modification. The residue at position 39 (cysteine 39) is a Cysteine sulfenic acid (-SOH). EF-hand domains lie at 41 to 59 (SGRITRQEFESIYSKFFPD), 61 to 96 (DPKAYAQHVFRSFDANSDGTLDFKEYVIALHMTTAG), 97 to 132 (KPTQKLEWAFSLYDVDGNGTISKNEVLEIVMAIFKM), and 147 to 182 (TPEKRAEKIWAFFGKKEDDKLTEEEFIEGTLANKEI). Residues aspartate 74, asparagine 76, aspartate 78, threonine 80, glutamate 85, aspartate 110, aspartate 112, asparagine 114, threonine 116, and glutamate 121 each coordinate Ca(2+). The tract at residues 189-192 (EPQK) is interaction with GRK1.

The protein belongs to the recoverin family. As to quaternary structure, homodimer; disulfide-linked. Homodimerization is caused by prolonged intense illumination. May form a complex composed of RHO, GRK1 and RCVRN in a Ca(2+)-dependent manner; RCVRN prevents the interaction between GRK1 and RHO. Interacts (via C-terminus) with GRK1 (via N-terminus); the interaction is Ca(2+)-dependent. In terms of processing, the N-terminal glycine is linked to one of four different types of acyl groups. The most abundant is myristoleate (14:1), but 14:0, 14:2, and 12:0 acyl residues are also present. The Ca(2+) induced exposure of the myristoyl group, known as the calcium-myristoyl switch, promotes RCVRN binding to the photoreceptor cell membranes only when intracellular Ca(2+) concentration is high. Post-translationally, oxidation on Cys-39 occurs in response to prolonged intense illumination and results in the formation of disulfide homodimers, and to a lesser extent disulfide-linked heterodimers. As to expression, expressed in rod photoreceptors in the retina (at protein level).

It is found in the photoreceptor inner segment. Its subcellular location is the cell projection. The protein resides in the cilium. It localises to the photoreceptor outer segment. The protein localises to the photoreceptor outer segment membrane. It is found in the perikaryon. In terms of biological role, acts as a calcium sensor and regulates phototransduction of cone and rod photoreceptor cells. Modulates light sensitivity of cone photoreceptor in dark and dim conditions. In response to high Ca(2+) levels induced by low light levels, prolongs RHO/rhodopsin activation in rod photoreceptor cells by binding to and inhibiting GRK1-mediated phosphorylation of RHO/rhodopsin. Plays a role in scotopic vision/enhances vision in dim light by enhancing signal transfer between rod photoreceptors and rod bipolar cells. Improves rod photoreceptor sensitivity in dim light and mediates response of rod photoreceptors to facilitate detection of change and motion in bright light. The protein is Recoverin (Rcvrn) of Mus musculus (Mouse).